Consider the following 493-residue polypeptide: Ribose import ATP-binding protein RbsA (493 aa).

2 consecutive ABC transporter domains span residues leucine 5–arginine 241 and glutamate 252–isoleucine 491. Glycine 37 to serine 44 contributes to the ATP binding site.

It belongs to the ABC transporter superfamily. Ribose importer (TC 3.A.1.2.1) family. As to quaternary structure, the complex is composed of an ATP-binding protein (RbsA), two transmembrane proteins (RbsC) and a solute-binding protein (RbsB).

Its subcellular location is the cell inner membrane. The catalysed reaction is D-ribose(out) + ATP + H2O = D-ribose(in) + ADP + phosphate + H(+). Part of the ABC transporter complex RbsABC involved in ribose import. Responsible for energy coupling to the transport system. The sequence is that of Ribose import ATP-binding protein RbsA from Haemophilus influenzae (strain 86-028NP).